Consider the following 334-residue polypeptide: Phosphoribosylformylglycinamidine cyclo-ligase (334 aa).

Belongs to the AIR synthase family.

It localises to the cytoplasm. It catalyses the reaction 2-formamido-N(1)-(5-O-phospho-beta-D-ribosyl)acetamidine + ATP = 5-amino-1-(5-phospho-beta-D-ribosyl)imidazole + ADP + phosphate + H(+). It participates in purine metabolism; IMP biosynthesis via de novo pathway; 5-amino-1-(5-phospho-D-ribosyl)imidazole from N(2)-formyl-N(1)-(5-phospho-D-ribosyl)glycinamide: step 2/2. This Thermococcus gammatolerans (strain DSM 15229 / JCM 11827 / EJ3) protein is Phosphoribosylformylglycinamidine cyclo-ligase.